Here is a 284-residue protein sequence, read N- to C-terminus: Phosphatidylserine decarboxylase proenzyme (284 aa).

Catalysis depends on charge relay system; for autoendoproteolytic cleavage activity residues aspartate 88, histidine 145, and serine 248. The active-site Schiff-base intermediate with substrate; via pyruvic acid; for decarboxylase activity is the serine 248. Serine 248 carries the post-translational modification Pyruvic acid (Ser); by autocatalysis.

Belongs to the phosphatidylserine decarboxylase family. PSD-B subfamily. Prokaryotic type I sub-subfamily. In terms of assembly, heterodimer of a large membrane-associated beta subunit and a small pyruvoyl-containing alpha subunit. Requires pyruvate as cofactor. Is synthesized initially as an inactive proenzyme. Formation of the active enzyme involves a self-maturation process in which the active site pyruvoyl group is generated from an internal serine residue via an autocatalytic post-translational modification. Two non-identical subunits are generated from the proenzyme in this reaction, and the pyruvate is formed at the N-terminus of the alpha chain, which is derived from the carboxyl end of the proenzyme. The autoendoproteolytic cleavage occurs by a canonical serine protease mechanism, in which the side chain hydroxyl group of the serine supplies its oxygen atom to form the C-terminus of the beta chain, while the remainder of the serine residue undergoes an oxidative deamination to produce ammonia and the pyruvoyl prosthetic group on the alpha chain. During this reaction, the Ser that is part of the protease active site of the proenzyme becomes the pyruvoyl prosthetic group, which constitutes an essential element of the active site of the mature decarboxylase.

The protein localises to the cell membrane. It carries out the reaction a 1,2-diacyl-sn-glycero-3-phospho-L-serine + H(+) = a 1,2-diacyl-sn-glycero-3-phosphoethanolamine + CO2. Its pathway is phospholipid metabolism; phosphatidylethanolamine biosynthesis; phosphatidylethanolamine from CDP-diacylglycerol: step 2/2. In terms of biological role, catalyzes the formation of phosphatidylethanolamine (PtdEtn) from phosphatidylserine (PtdSer). The chain is Phosphatidylserine decarboxylase proenzyme from Albidiferax ferrireducens (strain ATCC BAA-621 / DSM 15236 / T118) (Rhodoferax ferrireducens).